The chain runs to 614 residues: Chaperone protein HtpG (614 aa).

The tract at residues 1 to 324 is a; substrate-binding; that stretch reads MSQIETKEFQ…SEELPLNISR (324 aa). The interval 325-537 is b; it reads ETMQDSALIA…SHYGTHSMQR (213 aa). Positions 538 to 614 are c; that stretch reads MMQLMNRDLQ…LNEILEKALR (77 aa).

This sequence belongs to the heat shock protein 90 family. Homodimer.

The protein localises to the cytoplasm. Molecular chaperone. Has ATPase activity. This chain is Chaperone protein HtpG, found in Desulfitobacterium hafniense (strain Y51).